The primary structure comprises 403 residues: Argininosuccinate synthase (403 aa).

Residues 13-21 (AYSGGLDTS) and A40 contribute to the ATP site. L-citrulline is bound by residues Y91 and S96. G121 serves as a coordination point for ATP. 3 residues coordinate L-aspartate: T123, N127, and D128. N127 contacts L-citrulline. Residues R131, S180, S189, E265, and Y277 each coordinate L-citrulline.

This sequence belongs to the argininosuccinate synthase family. Type 1 subfamily. Homotetramer.

The protein resides in the cytoplasm. The catalysed reaction is L-citrulline + L-aspartate + ATP = 2-(N(omega)-L-arginino)succinate + AMP + diphosphate + H(+). The protein operates within amino-acid biosynthesis; L-arginine biosynthesis; L-arginine from L-ornithine and carbamoyl phosphate: step 2/3. This Leptospira interrogans serogroup Icterohaemorrhagiae serovar Lai (strain 56601) protein is Argininosuccinate synthase.